We begin with the raw amino-acid sequence, 351 residues long: MLLSLGSNGNFQLGLNNDEDVYSPQIVPFDRAIEKISCGGNHTLLLDEDSQLWACGDNRKGQCGYEVKEPLYNPLSPDYLRIFTRVSHERWVFLTCGWEFSVIVHADRRRVCSCGEGLSGELGQGNRSNSQGLREIDIPYLDDKEFIIDISAGLRHWICVTNEGNLYGCGDGRKGQLGPVVMKTVNKVSFLGRIEHAQAVVCGVQFSAVLQETGHVIVLGGEKWNVAAECDAWQANNSELSSSICSISANWSTLSLLSTEGCVYAFGRCDRAQKAHTKASDIVQIASGTEHNILRTKKGSVLIYGWNEHGNASNDDKRDVYDAKTLQLPGWAYIVAAGYATSWIVIEENHK.

4 RCC1 repeats span residues M1–E48, S50–A106, R108–N162, and E163–E212.

The protein resides in the cytoplasm. It is found in the nucleus. This Schizosaccharomyces pombe (strain 972 / ATCC 24843) (Fission yeast) protein is RCC1 repeat-containing protein C10F6.04.